A 397-amino-acid chain; its full sequence is Elongation factor Tu (397 aa).

One can recognise a tr-type G domain in the interval 10–206 (KPHCNIGTIG…TIDEYVPDPE (197 aa)). Residues 19–26 (GHVDHGKT) form a G1 region. 19-26 (GHVDHGKT) provides a ligand contact to GTP. T26 is a binding site for Mg(2+). The tract at residues 61–65 (GITIS) is G2. Residues 82–85 (DCPG) are G3. GTP-binding positions include 82 to 86 (DCPGH) and 137 to 140 (NKCD). Residues 137–140 (NKCD) form a G4 region. A G5 region spans residues 175–177 (SAL).

This sequence belongs to the TRAFAC class translation factor GTPase superfamily. Classic translation factor GTPase family. EF-Tu/EF-1A subfamily. Monomer.

Its subcellular location is the cytoplasm. The catalysed reaction is GTP + H2O = GDP + phosphate + H(+). In terms of biological role, GTP hydrolase that promotes the GTP-dependent binding of aminoacyl-tRNA to the A-site of ribosomes during protein biosynthesis. The sequence is that of Elongation factor Tu from Lachnospira eligens (strain ATCC 27750 / DSM 3376 / VPI C15-48 / C15-B4) (Eubacterium eligens).